The chain runs to 425 residues: CinA-like protein (425 aa).

This sequence belongs to the CinA family.

In Desulfovibrio desulfuricans (strain ATCC 27774 / DSM 6949 / MB), this protein is CinA-like protein.